A 388-amino-acid polypeptide reads, in one-letter code: Chorismate synthase (388 aa).

Arg-39 and Arg-45 together coordinate NADP(+). Residues 132–134 (RSS), 251–252 (NA), Gly-296, 311–315 (KPIPT), and Arg-337 contribute to the FMN site.

It belongs to the chorismate synthase family. As to quaternary structure, homotetramer. FMNH2 is required as a cofactor.

It catalyses the reaction 5-O-(1-carboxyvinyl)-3-phosphoshikimate = chorismate + phosphate. The protein operates within metabolic intermediate biosynthesis; chorismate biosynthesis; chorismate from D-erythrose 4-phosphate and phosphoenolpyruvate: step 7/7. Functionally, catalyzes the anti-1,4-elimination of the C-3 phosphate and the C-6 proR hydrogen from 5-enolpyruvylshikimate-3-phosphate (EPSP) to yield chorismate, which is the branch point compound that serves as the starting substrate for the three terminal pathways of aromatic amino acid biosynthesis. This reaction introduces a second double bond into the aromatic ring system. The polypeptide is Chorismate synthase (Staphylococcus carnosus (strain TM300)).